Consider the following 572-residue polypeptide: Proline--tRNA ligase (572 aa).

Belongs to the class-II aminoacyl-tRNA synthetase family. ProS type 1 subfamily. In terms of assembly, homodimer.

Its subcellular location is the cytoplasm. The catalysed reaction is tRNA(Pro) + L-proline + ATP = L-prolyl-tRNA(Pro) + AMP + diphosphate. Catalyzes the attachment of proline to tRNA(Pro) in a two-step reaction: proline is first activated by ATP to form Pro-AMP and then transferred to the acceptor end of tRNA(Pro). As ProRS can inadvertently accommodate and process non-cognate amino acids such as alanine and cysteine, to avoid such errors it has two additional distinct editing activities against alanine. One activity is designated as 'pretransfer' editing and involves the tRNA(Pro)-independent hydrolysis of activated Ala-AMP. The other activity is designated 'posttransfer' editing and involves deacylation of mischarged Ala-tRNA(Pro). The misacylated Cys-tRNA(Pro) is not edited by ProRS. The chain is Proline--tRNA ligase from Yersinia pestis (strain Pestoides F).